Here is a 409-residue protein sequence, read N- to C-terminus: Tryptophan synthase beta chain (409 aa).

The residue at position 98 (Lys-98) is an N6-(pyridoxal phosphate)lysine.

It belongs to the TrpB family. Tetramer of two alpha and two beta chains. It depends on pyridoxal 5'-phosphate as a cofactor.

The enzyme catalyses (1S,2R)-1-C-(indol-3-yl)glycerol 3-phosphate + L-serine = D-glyceraldehyde 3-phosphate + L-tryptophan + H2O. It participates in amino-acid biosynthesis; L-tryptophan biosynthesis; L-tryptophan from chorismate: step 5/5. In terms of biological role, the beta subunit is responsible for the synthesis of L-tryptophan from indole and L-serine. The polypeptide is Tryptophan synthase beta chain (Jannaschia sp. (strain CCS1)).